Here is a 618-residue protein sequence, read N- to C-terminus: Chaperone protein dnaK (618 aa).

Residues 595–618 are disordered; that stretch reads SKTETTTPNKNEEDVIDASFSEEK.

Belongs to the heat shock protein 70 family.

It is found in the plastid. It localises to the cyanelle. Its function is as follows. Acts as a chaperone. This is Chaperone protein dnaK (dnaK-A) from Cyanophora paradoxa.